The chain runs to 321 residues: Cytochrome c biogenesis protein CcsA (321 aa).

A run of 8 helical transmembrane segments spans residues 12–32, 45–62, 71–91, 98–117, 143–163, 227–247, 260–277, and 292–312; these read HISF…LLVY, MIAT…RWIS, LYES…ILYI, LNAI…TSGL, MLLS…LIVI, VISL…VWAN, ETWA…LHTR, and VASI…LLGI.

Belongs to the CcmF/CycK/Ccl1/NrfE/CcsA family. As to quaternary structure, may interact with Ccs1.

The protein resides in the plastid. It localises to the chloroplast thylakoid membrane. Required during biogenesis of c-type cytochromes (cytochrome c6 and cytochrome f) at the step of heme attachment. In Phalaenopsis aphrodite subsp. formosana (Moth orchid), this protein is Cytochrome c biogenesis protein CcsA.